A 580-amino-acid polypeptide reads, in one-letter code: DNA mismatch repair protein MutL (580 aa).

This sequence belongs to the DNA mismatch repair MutL/HexB family.

This protein is involved in the repair of mismatches in DNA. It is required for dam-dependent methyl-directed DNA mismatch repair. May act as a 'molecular matchmaker', a protein that promotes the formation of a stable complex between two or more DNA-binding proteins in an ATP-dependent manner without itself being part of a final effector complex. This is DNA mismatch repair protein MutL from Chlamydia caviae (strain ATCC VR-813 / DSM 19441 / 03DC25 / GPIC) (Chlamydophila caviae).